The primary structure comprises 430 residues: Asparagine--tRNA ligase (430 aa).

Belongs to the class-II aminoacyl-tRNA synthetase family. As to quaternary structure, homodimer.

Its subcellular location is the cytoplasm. The catalysed reaction is tRNA(Asn) + L-asparagine + ATP = L-asparaginyl-tRNA(Asn) + AMP + diphosphate + H(+). The protein is Asparagine--tRNA ligase of Staphylococcus aureus (strain MRSA252).